The chain runs to 153 residues: Urease accessory protein UreE (153 aa).

This sequence belongs to the UreE family.

The protein resides in the cytoplasm. Involved in urease metallocenter assembly. Binds nickel. Probably functions as a nickel donor during metallocenter assembly. In Acetivibrio thermocellus (strain ATCC 27405 / DSM 1237 / JCM 9322 / NBRC 103400 / NCIMB 10682 / NRRL B-4536 / VPI 7372) (Clostridium thermocellum), this protein is Urease accessory protein UreE.